The sequence spans 712 residues: NURS complex subunit red1 (712 aa).

The segment covering 1 to 22 has biased composition (basic and acidic residues); it reads MSRSINLDELRKKALESKKKNE. 3 disordered regions span residues 1–71, 107–195, and 323–348; these read MSRS…DRFP, NKTF…TTNQ, and DDFSNSKIEQSNLEKPPSNSENGLTM. Positions 5 to 32 form a coiled coil; that stretch reads INLDELRKKALESKKKNEEDESNDSDKE. Residues 23 to 42 are compositionally biased toward acidic residues; it reads EDESNDSDKEDGEISEDDPV. Positions 130 to 141 are enriched in low complexity; the sequence is SETSDSSNTSQS. Polar residues-rich tracts occupy residues 178–193 and 327–348; these read FLSTSKNSDANYSKTT and NSKIEQSNLEKPPSNSENGLTM. A coiled-coil region spans residues 351 to 379; sequence SDYLALLRNKEEEIRRMTKLILRLESNKK. The disordered stretch occupies residues 428–447; the sequence is PSISSSGASSSAATTNSDTT. A coiled-coil region spans residues 471 to 501; the sequence is AQIKKSEIDILNNLIEKEEGELTKYQTLVKS. The segment covering 545 to 567 has biased composition (polar residues); the sequence is QADENSSQILSSKTSNAPNGTTE. Positions 545–568 are disordered; the sequence is QADENSSQILSSKTSNAPNGTTET. Residues 618–639 form a C3H1-type zinc finger; the sequence is FCKYETTGGVCNDDHCEASHFR.

As to quaternary structure, interacts with mmi1, pla1 and rrp6.

The protein localises to the nucleus. In terms of biological role, promotes the exosome-mediated degradation of mRNAs containing a DSR (determinant of selective removal) signal sequence from mitotic cells. This is NURS complex subunit red1 from Schizosaccharomyces pombe (strain 972 / ATCC 24843) (Fission yeast).